A 904-amino-acid chain; its full sequence is Protein translocase subunit SecA (904 aa).

ATP-binding positions include glutamine 89, 107 to 111, and aspartate 502; that span reads GEGKT. Residues 872-892 form a disordered region; the sequence is VESDPTTWGEPSRNDPCPCGS. Positions 888, 890, 899, and 900 each coordinate Zn(2+).

It belongs to the SecA family. In terms of assembly, part of the essential protein translocation apparatus which comprises SecA, SecYEG and auxiliary proteins SecDF-YajC and YidC. Homodimer. Zn(2+) is required as a cofactor.

Its subcellular location is the cell inner membrane. It is found in the cytoplasm. The catalysed reaction is ATP + H2O + cellular proteinSide 1 = ADP + phosphate + cellular proteinSide 2.. Its function is as follows. Part of the Sec protein translocase complex. Interacts with the SecYEG preprotein conducting channel. Has a central role in coupling the hydrolysis of ATP to the transfer of proteins into and across the cell membrane, serving both as a receptor for the preprotein-SecB complex and as an ATP-driven molecular motor driving the stepwise translocation of polypeptide chains across the membrane. This Rhodobacter capsulatus (Rhodopseudomonas capsulata) protein is Protein translocase subunit SecA.